The primary structure comprises 321 residues: Protease HtpX homolog (321 aa).

The next 2 membrane-spanning stretches (helical) occupy residues 6 to 26 (TAML…LIGG) and 28 to 48 (GGMM…YWNS). Residue histidine 130 coordinates Zn(2+). The active site involves glutamate 131. Zn(2+) is bound at residue histidine 134. The next 2 helical transmembrane spans lie at 145-165 (ITAT…FFGG) and 173-193 (PLGF…AMLV). Position 202 (glutamate 202) interacts with Zn(2+). Positions 281–321 (EFSPRASTPPPSGDRPVRKSGSVPTTGWRRGNENERKGPWS) are disordered. Residues 310-321 (RGNENERKGPWS) show a composition bias toward basic and acidic residues.

It belongs to the peptidase M48B family. Zn(2+) is required as a cofactor.

It localises to the cell inner membrane. The chain is Protease HtpX homolog from Agrobacterium fabrum (strain C58 / ATCC 33970) (Agrobacterium tumefaciens (strain C58)).